Consider the following 79-residue polypeptide: MTVINDYREEPEEAFWILYPMGVKCLSMITKSLLNTNRDFVTDCAFQLNILLIMTVKPKQVQPVSSLKTANFKIFYVKI.

This is an uncharacterized protein from Bacillus subtilis (strain 168).